The chain runs to 453 residues: Serine/threonine-protein phosphatase 2A 55 kDa regulatory subunit B delta isoform (453 aa).

WD repeat units lie at residues 32 to 71 (AEAD…KGRA), 97 to 138 (EIEE…KRAE), 181 to 219 (AHTY…RSFN), and 230 to 270 (ELTE…LCDR). Serine 285 bears the Phosphoserine mark. 3 WD repeats span residues 289–327 (EIIS…RPVE), 344–385 (ENDC…DVTL), and 420–452 (DFNK…QDKI). Phosphotyrosine is present on tyrosine 305. Threonine 308 carries the phosphothreonine modification. Residues 385-406 (LEASRENSKPRASLKPRKVCSG) form a disordered region.

Belongs to the phosphatase 2A regulatory subunit B family. PP2A consists of a common heterodimeric core enzyme, composed of a 36 kDa catalytic subunit (subunit C) and a 65 kDa constant regulatory subunit (PR65 or subunit A), that associates with a variety of regulatory subunits. Proteins that associate with the core dimer include three families of regulatory subunits B (the R2/B/PR55/B55, R3/B''/PR72/PR130/PR59 and R5/B'/B56 families), the 48 kDa variable regulatory subunit, viral proteins, and cell signaling molecules. Interacts with ENSA (when phosphorylated at 'Ser-67') and ARPP19 (when phosphorylated at 'Ser-62'), leading to inhibit PP2A activity. Interacts with IER5. Widely expressed with high levels in brain, heart, placenta, skeletal muscle, testis, thymus and spleen.

The protein localises to the cytoplasm. Functionally, substrate-recognition subunit of protein phosphatase 2A (PP2A) that plays a key role in cell cycle by controlling mitosis entry and exit. Involved in chromosome clustering during late mitosis by mediating dephosphorylation of MKI67. The activity of PP2A complexes containing PPP2R2D (PR55-delta) fluctuate during the cell cycle: the activity is high in interphase and low in mitosis. The sequence is that of Serine/threonine-protein phosphatase 2A 55 kDa regulatory subunit B delta isoform (Ppp2r2d) from Rattus norvegicus (Rat).